Consider the following 84-residue polypeptide: Putative membrane protein insertion efficiency factor (84 aa).

The protein belongs to the UPF0161 family.

It is found in the cell inner membrane. Functionally, could be involved in insertion of integral membrane proteins into the membrane. The chain is Putative membrane protein insertion efficiency factor from Shewanella loihica (strain ATCC BAA-1088 / PV-4).